We begin with the raw amino-acid sequence, 347 residues long: N-acetyl-gamma-glutamyl-phosphate reductase (347 aa).

Residue cysteine 151 is part of the active site.

The protein belongs to the NAGSA dehydrogenase family. Type 1 subfamily.

Its subcellular location is the cytoplasm. The enzyme catalyses N-acetyl-L-glutamate 5-semialdehyde + phosphate + NADP(+) = N-acetyl-L-glutamyl 5-phosphate + NADPH + H(+). The protein operates within amino-acid biosynthesis; L-arginine biosynthesis; N(2)-acetyl-L-ornithine from L-glutamate: step 3/4. In terms of biological role, catalyzes the NADPH-dependent reduction of N-acetyl-5-glutamyl phosphate to yield N-acetyl-L-glutamate 5-semialdehyde. This Pelotomaculum thermopropionicum (strain DSM 13744 / JCM 10971 / SI) protein is N-acetyl-gamma-glutamyl-phosphate reductase.